A 277-amino-acid chain; its full sequence is Prohibitin-3, mitochondrial (277 aa).

An N-acetylglycine modification is found at G2. Residues 2–6 (GSQQA) are Mitochondrial matrix-facing. A helical; Signal-anchor for type II membrane protein membrane pass occupies residues 7–28 (AVSFLSNLAKAAFGLGTAATVL). The Mitochondrial intermembrane segment spans residues 29–277 (NTSLFTVDGG…GQSMLFALNR (249 aa)).

Belongs to the prohibitin family. Component of a prohibitin multimeric complex in mitochondrial membranes. As to expression, mostly expressed in proliferative tissues, including vasculature, shoot and root apical tissues. Expressed in roots, stems, leaves and flowers (at protein level).

Its subcellular location is the cell membrane. The protein localises to the mitochondrion inner membrane. It localises to the nucleus. The protein resides in the cytoplasm. In terms of biological role, prohibitin probably acts as a holdase/unfoldase for the stabilization of newly synthesized mitochondrial proteins. Necessary for mitochondrial and cell metabolism and biogenesis. Required to regulate the ethylene-mediated signaling; involved in growth maintenance in the presence of ethylene. Functions in nitric oxide (NO)-mediated responses and in hydrogen peroxide-induced NO accumulation. The polypeptide is Prohibitin-3, mitochondrial (PHB3) (Arabidopsis thaliana (Mouse-ear cress)).